The chain runs to 142 residues: MAREYARTDRVGQQIQKEIATILMREIKDPRLSMTTVSAVEVTRDLAYAKIFVTFFNDNQDEIKASLEVLAEAEGYIRSLLGKRLRARIMPHLRFVYDSSMSEGVRMSALVDQAVASDKNGDAEVDDTQVDDEPSVDSEKGE.

The interval 118–142 is disordered; it reads DKNGDAEVDDTQVDDEPSVDSEKGE. The segment covering 123 to 136 has biased composition (acidic residues); the sequence is AEVDDTQVDDEPSV.

Belongs to the RbfA family. As to quaternary structure, monomer. Binds 30S ribosomal subunits, but not 50S ribosomal subunits or 70S ribosomes.

The protein resides in the cytoplasm. Functionally, one of several proteins that assist in the late maturation steps of the functional core of the 30S ribosomal subunit. Associates with free 30S ribosomal subunits (but not with 30S subunits that are part of 70S ribosomes or polysomes). Required for efficient processing of 16S rRNA. May interact with the 5'-terminal helix region of 16S rRNA. In Colwellia psychrerythraea (strain 34H / ATCC BAA-681) (Vibrio psychroerythus), this protein is Ribosome-binding factor A.